A 243-amino-acid chain; its full sequence is Probable glycerol uptake facilitator protein (243 aa).

The next 2 membrane-spanning stretches (helical) occupy residues 7–27 (ILLG…GVCA) and 44–64 (LLIA…SIQV). Positions 72-74 (NPA) match the NPA 1 motif. 3 helical membrane-spanning segments follow: residues 88–108 (IGLL…AQII), 143–163 (ISYE…GDYH), and 166–186 (TGVF…GCAI). The short motif at 187-189 (NPA) is the NPA 2 element. A helical transmembrane segment spans residues 221–241 (LVPLLAPIAAGLIMGGFSLLI).

Belongs to the MIP/aquaporin (TC 1.A.8) family.

It is found in the cell membrane. The catalysed reaction is glycerol(in) = glycerol(out). Mediates glycerol diffusion across the cytoplasmic membrane via a pore-type mechanism. This chain is Probable glycerol uptake facilitator protein (glpF), found in Mycoplasmoides gallisepticum (strain R(low / passage 15 / clone 2)) (Mycoplasma gallisepticum).